Reading from the N-terminus, the 441-residue chain is Ubiquitin carboxyl-terminal hydrolase MINDY-3 (441 aa).

C51 acts as the Nucleophile in catalysis. Catalysis depends on H284, which acts as the Proton acceptor.

This sequence belongs to the MINDY deubiquitinase family. FAM188 subfamily.

It localises to the nucleus. It catalyses the reaction Thiol-dependent hydrolysis of ester, thioester, amide, peptide and isopeptide bonds formed by the C-terminal Gly of ubiquitin (a 76-residue protein attached to proteins as an intracellular targeting signal).. Functionally, hydrolase that can remove 'Lys-48'-linked conjugated ubiquitin from proteins. This is Ubiquitin carboxyl-terminal hydrolase MINDY-3 (mindy3) from Xenopus tropicalis (Western clawed frog).